We begin with the raw amino-acid sequence, 386 residues long: Mannitol-1-phosphate 5-dehydrogenase (386 aa).

6–17 provides a ligand contact to NAD(+); sequence AIHFGGGNIGRG. Lys-214 is a catalytic residue.

Belongs to the mannitol dehydrogenase family. As to quaternary structure, monomer.

It carries out the reaction D-mannitol 1-phosphate + NAD(+) = beta-D-fructose 6-phosphate + NADH + H(+). In terms of biological role, catalyzes the NAD(H)-dependent interconversion of D-fructose 6-phosphate and D-mannitol 1-phosphate in the mannitol metabolic pathway. Plays a key role in liamocins biosynthesis by providing the mannitol moity that is linked to 3,5-dihydroxydecanoic acid (provided by the HR-PKS PKS1) via ester bond formation catalyzed by the esterase EST1. This is Mannitol-1-phosphate 5-dehydrogenase from Aureobasidium melanogenum (Aureobasidium pullulans var. melanogenum).